The sequence spans 298 residues: Putative insertion sequence ATP-binding protein y4iQ/y4nD/y4sD (298 aa).

Gly-114–Ser-121 contacts ATP. The disordered stretch occupies residues Arg-276–Thr-298.

Belongs to the IS21/IS1162 putative ATP-binding protein family.

The protein is Putative insertion sequence ATP-binding protein y4iQ/y4nD/y4sD of Sinorhizobium fredii (strain NBRC 101917 / NGR234).